The sequence spans 502 residues: MTEKKYIVALDQGTTSSRAVVMDHDANIVSVSQREFEQIYPKPGWVEHDPMEIWASQSSTLVEVLAKADISSDQIAAIGITNQRETAIVWERETGKPIYNAIVWQCRRTADICEQLKRDGLEDYIRDNTGLVVDPYFSGTKVKWILDHVEGSRERAKRGELLFGTVDTWLIWKMTQGRVHVTDYTNASRTMLFNIHDLDWDDKMLDVLDIPRAMLPQVRKSSEVYGQTNIGGKGGTRIPIAGIAGDQQAALFGQLCVKEGMAKNTYGTGCFMLMNTGEKAVKSENGLLITIACGPSGEVNYALEGAVFMAGASIQWLRDEMKLISDAFDSEYFATKVKDTNGVYVVPAFTGLGAPYWDPYARGAIFGLTRGVNSNHIIRATLESIAYQTRDVLEAMQADSGIRLHALRVDGGAVANNFLMQFQSDILGTRVERPEVREVTALGAAYLAGLAVGYWQNLDELQEKAVIEREFRPGIETTERNYRYSGWKKAVKRAMAWEEHDK.

Residue threonine 14 participates in ADP binding. Residues threonine 14, threonine 15, and serine 16 each coordinate ATP. Threonine 14 contributes to the sn-glycerol 3-phosphate binding site. Residue arginine 18 participates in ADP binding. Residues arginine 84, glutamate 85, tyrosine 136, and aspartate 246 each contribute to the sn-glycerol 3-phosphate site. Residues arginine 84, glutamate 85, tyrosine 136, aspartate 246, and glutamine 247 each coordinate glycerol. Threonine 268 and glycine 311 together coordinate ADP. Threonine 268, glycine 311, glutamine 315, and glycine 412 together coordinate ATP. ADP is bound by residues glycine 412 and asparagine 416.

This sequence belongs to the FGGY kinase family. In terms of assembly, homotetramer and homodimer (in equilibrium). Heterodimer with EIIA-Glc. Binds 1 zinc ion per glycerol kinase EIIA-Glc dimer. The zinc ion is important for dimerization.

The catalysed reaction is glycerol + ATP = sn-glycerol 3-phosphate + ADP + H(+). It participates in polyol metabolism; glycerol degradation via glycerol kinase pathway; sn-glycerol 3-phosphate from glycerol: step 1/1. With respect to regulation, activity of this regulatory enzyme is affected by several metabolites. Allosterically and non-competitively inhibited by fructose 1,6-bisphosphate (FBP) and unphosphorylated phosphocarrier protein EIIA-Glc (III-Glc), an integral component of the bacterial phosphotransferase (PTS) system. In terms of biological role, key enzyme in the regulation of glycerol uptake and metabolism. Catalyzes the phosphorylation of glycerol to yield sn-glycerol 3-phosphate. The chain is Glycerol kinase from Salmonella typhimurium (strain LT2 / SGSC1412 / ATCC 700720).